A 346-amino-acid polypeptide reads, in one-letter code: DNA-directed RNA polymerase subunit alpha (346 aa).

Positions 1-243 (MTMNNPNLTM…EQLSIWVNFE (243 aa)) are alpha N-terminal domain (alpha-NTD). Positions 260 to 346 (LNENLFRSVE…ERWKAQQAQA (87 aa)) are alpha C-terminal domain (alpha-CTD).

The protein belongs to the RNA polymerase alpha chain family. Homodimer. The RNAP catalytic core consists of 2 alpha, 1 beta, 1 beta' and 1 omega subunit. When a sigma factor is associated with the core the holoenzyme is formed, which can initiate transcription.

The catalysed reaction is RNA(n) + a ribonucleoside 5'-triphosphate = RNA(n+1) + diphosphate. In terms of biological role, DNA-dependent RNA polymerase catalyzes the transcription of DNA into RNA using the four ribonucleoside triphosphates as substrates. In Sorangium cellulosum (strain So ce56) (Polyangium cellulosum (strain So ce56)), this protein is DNA-directed RNA polymerase subunit alpha.